The chain runs to 423 residues: Diaminobutyrate--2-oxoglutarate transaminase (423 aa).

N6-(pyridoxal phosphate)lysine is present on Lys271.

The protein belongs to the class-III pyridoxal-phosphate-dependent aminotransferase family. Pyridoxal 5'-phosphate is required as a cofactor.

The enzyme catalyses L-2,4-diaminobutanoate + 2-oxoglutarate = L-aspartate 4-semialdehyde + L-glutamate. It participates in amine and polyamine biosynthesis; ectoine biosynthesis; L-ectoine from L-aspartate 4-semialdehyde: step 1/3. In terms of biological role, catalyzes reversively the conversion of L-aspartate beta-semialdehyde (ASA) to L-2,4-diaminobutyrate (DABA) by transamination with L-glutamate. The sequence is that of Diaminobutyrate--2-oxoglutarate transaminase (ectB) from Streptomyces coelicolor (strain ATCC BAA-471 / A3(2) / M145).